The chain runs to 347 residues: Endothelin receptor type B (347 aa).

Residues 1–7 are Extracellular-facing; it reads EIKETFK. The chain crosses the membrane as a helical span at residues 8–32; the sequence is YINTVVSCLVFVLGIIGNSTLLRII. Over 33–43 the chain is Cytoplasmic; the sequence is YKNKCMRNGPN. A helical membrane pass occupies residues 44–69; sequence ILIASLALGDLLHIIIDIPISVYKLL. Residues 70-81 are Extracellular-facing; that stretch reads AEDWPFGVEMCK. An intrachain disulfide couples Cys-80 to Cys-161. Residues 82 to 103 traverse the membrane as a helical segment; that stretch reads LVPFIQKASVGITVLSLCALSI. Residues 104–124 are Cytoplasmic-facing; it reads DRYRAVASWSRIKGIGVPKWT. Residues 125 to 149 form a helical membrane-spanning segment; the sequence is AVEIVLIWVISVVLAVPEAIAFDMI. The Extracellular segment spans residues 150–177; sequence TMEYRGKDLRICLLHPTQKTSFMMFYKQ. Residues 178 to 202 traverse the membrane as a helical segment; sequence AKDWWLFSFYFCLPLAITALFYTLM. Residues 203–230 are Cytoplasmic-facing; the sequence is TCEMLRKKSGMQIALNDHLKQRREVAKT. The helical transmembrane segment at 231-256 threads the bilayer; the sequence is VFCLVLVFALCWLPLHLSRILKLTIY. Topologically, residues 257–268 are extracellular; sequence DQKDPNRCELLS. Residues 269–295 form a helical membrane-spanning segment; that stretch reads FFLVMDYIGINMASLNSCINPIALYLV. Over 296–347 the chain is Cytoplasmic; the sequence is SKRFQNCFKSCLCCWCQSKDLLSLEERQSCLKFKANDHGYDNFRSSNKYSSS. Residues Cys-309 and Cys-311 are each lipidated (S-palmitoyl cysteine).

It belongs to the G-protein coupled receptor 1 family. Endothelin receptor subfamily. EDNRB sub-subfamily.

Its subcellular location is the cell membrane. In terms of biological role, non-specific receptor for endothelin 1, 2, and 3. Mediates its action by association with G proteins that activate a phosphatidylinositol-calcium second messenger system. The chain is Endothelin receptor type B (EDNRB) from Coturnix japonica (Japanese quail).